The sequence spans 880 residues: MKKLGVNEIRKEFLEFFRSKEHIIHPSAPLVPQKDKSLLLINSGMAPLKPYFAGLEEPPGKRMATCQKCIRTGDIENVGRTARHATFFEMLGNFSFGDYFKKESLTWGWEFVTKNLELPVDKLWATVYVDDDEAFEIWNKQIGLPEERIVRLGKADNFWEIGLGPCGPCSEIYFDRGEDYGCGCEECKPGCECDRYVEFWNHVFTQFDRDEEGNYHPLPNPNIDTGMGLERMACIMQGVDSIFDIDTMQDILNSVCKITSSEYKKDERTDVSIRIITDHVRSISLMIGDGILPSNEGRGYVLRRLLRRAARHGKLLGVNRAFLYELVDRVADNYGETYVELVDNKDYIKRVIKVEEERFMETIDQGMDILNQYIEELVTLKETVLSGVNAFKLYDTYGFPFDLTKEILEEKGLSLDETGFESEMEKQRQRARDARIGADTEGWKEDIFSGLDKEIQTAFKGYTNFEVEGKVLAIVSNDTVVEQCDKGKEATVILDETAFYGEGGGQVGDIGTLYNEAVRLSVLDTKKGPHNQVHHVVRVEEGTIKIGDEVKAKVDMVTRMSTARNHTATHLLHKALRDIVGEHVHQAGSLVTPDRLRFDFTHFEGLTKDQITQIEEKVNQQILMALDVRTFETSIEDAKKIGAQALFGEKYGDVVRVVKVGEYSTELCGGTHVTNSGEIGMFIMLSEAGVAAGVRRIEAITGMEAYKYVQKNQKTIQEIADTLKTQVQNVVERVADLVHETKEKDREINKLKSQLASNSTGDILDKATVVGGINVVVEVLENQEMDDLRKIGDVLKEKIGSGVIVLGSSNQDKVNFVAMATKDAVSKGVHAGNLVKEAAKIAGGGGGGRPDMAQAGGKNPQKIQEALDTVKEILVNQLNQ.

His566, His570, Cys668, and His672 together coordinate Zn(2+).

It belongs to the class-II aminoacyl-tRNA synthetase family. The cofactor is Zn(2+).

The protein resides in the cytoplasm. It carries out the reaction tRNA(Ala) + L-alanine + ATP = L-alanyl-tRNA(Ala) + AMP + diphosphate. Its function is as follows. Catalyzes the attachment of alanine to tRNA(Ala) in a two-step reaction: alanine is first activated by ATP to form Ala-AMP and then transferred to the acceptor end of tRNA(Ala). Also edits incorrectly charged Ser-tRNA(Ala) and Gly-tRNA(Ala) via its editing domain. This Alkaliphilus oremlandii (strain OhILAs) (Clostridium oremlandii (strain OhILAs)) protein is Alanine--tRNA ligase.